The following is a 157-amino-acid chain: 6,7-dimethyl-8-ribityllumazine synthase (157 aa).

Residues phenylalanine 25, alanine 59–glutamate 61, and alanine 83–isoleucine 85 contribute to the 5-amino-6-(D-ribitylamino)uracil site. Serine 88–threonine 89 is a binding site for (2S)-2-hydroxy-3-oxobutyl phosphate. Histidine 91 serves as the catalytic Proton donor. Phenylalanine 116 contacts 5-amino-6-(D-ribitylamino)uracil. Arginine 130 lines the (2S)-2-hydroxy-3-oxobutyl phosphate pocket.

The protein belongs to the DMRL synthase family.

It carries out the reaction (2S)-2-hydroxy-3-oxobutyl phosphate + 5-amino-6-(D-ribitylamino)uracil = 6,7-dimethyl-8-(1-D-ribityl)lumazine + phosphate + 2 H2O + H(+). It participates in cofactor biosynthesis; riboflavin biosynthesis; riboflavin from 2-hydroxy-3-oxobutyl phosphate and 5-amino-6-(D-ribitylamino)uracil: step 1/2. In terms of biological role, catalyzes the formation of 6,7-dimethyl-8-ribityllumazine by condensation of 5-amino-6-(D-ribitylamino)uracil with 3,4-dihydroxy-2-butanone 4-phosphate. This is the penultimate step in the biosynthesis of riboflavin. This chain is 6,7-dimethyl-8-ribityllumazine synthase, found in Lawsonia intracellularis (strain PHE/MN1-00).